The sequence spans 306 residues: D-alanine--D-alanine ligase (306 aa).

One can recognise an ATP-grasp domain in the interval 106–301 (KLLWQSAGIN…FEELVLKILG (196 aa)). 132–187 (AKELGLPLIVKPSREGSTIGLSKVREAGEVAAAWHLAARHDAMVLAEQFIEGTELT) serves as a coordination point for ATP. Mg(2+) is bound by residues Asp255, Glu268, and Asn270.

It belongs to the D-alanine--D-alanine ligase family. It depends on Mg(2+) as a cofactor. Mn(2+) is required as a cofactor.

It localises to the cytoplasm. It catalyses the reaction 2 D-alanine + ATP = D-alanyl-D-alanine + ADP + phosphate + H(+). Its pathway is cell wall biogenesis; peptidoglycan biosynthesis. Its function is as follows. Cell wall formation. This chain is D-alanine--D-alanine ligase, found in Nitrosospira multiformis (strain ATCC 25196 / NCIMB 11849 / C 71).